The sequence spans 93 residues: Alpha-defensin 13 (93 aa).

Residues Met1–Ala19 form the signal peptide. Residues Asp20–Ser58 constitute a propeptide that is removed on maturation. Positions Ile22–Leu54 are disordered. 3 disulfides stabilise this stretch: Cys64–Cys92, Cys66–Cys81, and Cys71–Cys91.

Belongs to the alpha-defensin family. In terms of tissue distribution, paneth cells of the small bowel.

The protein localises to the secreted. Functionally, probably contributes to the antimicrobial barrier function of the small bowel mucosa. In Mus musculus (Mouse), this protein is Alpha-defensin 13 (Defa13).